We begin with the raw amino-acid sequence, 315 residues long: Peroxidase 4 (315 aa).

Residues 1-19 (MAIFKILVLLLSLCCFSQA) form the signal peptide. Position 20 is a pyrrolidone carboxylic acid (Gln-20). Cystine bridges form between Cys-30–Cys-110, Cys-63–Cys-68, Cys-116–Cys-311, and Cys-195–Cys-221. Residue His-61 is the Proton acceptor of the active site. The Ca(2+) site is built by Asp-62, Val-65, Gly-67, Asp-69, and Ser-71. Position 158 (Pro-158) interacts with substrate. His-188 is a heme b binding site. Residue Thr-189 coordinates Ca(2+). Asn-205 carries N-linked (GlcNAc...) asparagine glycosylation. Positions 234, 237, and 242 each coordinate Ca(2+).

It belongs to the peroxidase family. Classical plant (class III) peroxidase subfamily. Heme b is required as a cofactor. The cofactor is Ca(2+).

The protein resides in the secreted. It carries out the reaction 2 a phenolic donor + H2O2 = 2 a phenolic radical donor + 2 H2O. Its function is as follows. Removal of H(2)O(2), oxidation of toxic reductants, biosynthesis and degradation of lignin, suberization, auxin catabolism, response to environmental stresses such as wounding, pathogen attack and oxidative stress. These functions might be dependent on each isozyme/isoform in each plant tissue. The polypeptide is Peroxidase 4 (PER4) (Arabidopsis thaliana (Mouse-ear cress)).